The sequence spans 185 residues: Pyridoxal 5'-phosphate synthase subunit PdxT (185 aa).

46–48 (GES) is a binding site for L-glutamine. The active-site Nucleophile is the cysteine 78. Residues arginine 106 and 132 to 133 (IR) contribute to the L-glutamine site. Residues histidine 168 and glutamate 170 each act as charge relay system in the active site.

The protein belongs to the glutaminase PdxT/SNO family. In terms of assembly, in the presence of PdxS, forms a dodecamer of heterodimers. Only shows activity in the heterodimer.

It carries out the reaction aldehydo-D-ribose 5-phosphate + D-glyceraldehyde 3-phosphate + L-glutamine = pyridoxal 5'-phosphate + L-glutamate + phosphate + 3 H2O + H(+). It catalyses the reaction L-glutamine + H2O = L-glutamate + NH4(+). It participates in cofactor biosynthesis; pyridoxal 5'-phosphate biosynthesis. Its function is as follows. Catalyzes the hydrolysis of glutamine to glutamate and ammonia as part of the biosynthesis of pyridoxal 5'-phosphate. The resulting ammonia molecule is channeled to the active site of PdxS. The sequence is that of Pyridoxal 5'-phosphate synthase subunit PdxT from Corynebacterium diphtheriae (strain ATCC 700971 / NCTC 13129 / Biotype gravis).